A 214-amino-acid chain; its full sequence is Uridine kinase (214 aa).

ATP is bound at residue 15–22 (GASASGKS).

This sequence belongs to the uridine kinase family.

Its subcellular location is the cytoplasm. The catalysed reaction is uridine + ATP = UMP + ADP + H(+). The enzyme catalyses cytidine + ATP = CMP + ADP + H(+). Its pathway is pyrimidine metabolism; CTP biosynthesis via salvage pathway; CTP from cytidine: step 1/3. It functions in the pathway pyrimidine metabolism; UMP biosynthesis via salvage pathway; UMP from uridine: step 1/1. In Aeromonas salmonicida (strain A449), this protein is Uridine kinase.